Reading from the N-terminus, the 131-residue chain is Protein ApaG (131 aa).

The ApaG domain occupies 7–131 (PVKPYDLTVS…FLLAMPRTLH (125 aa)).

In Bordetella bronchiseptica (strain ATCC BAA-588 / NCTC 13252 / RB50) (Alcaligenes bronchisepticus), this protein is Protein ApaG.